The sequence spans 585 residues: A-type ATP synthase subunit A (585 aa).

Residue 235-242 (GPFGSGKT) coordinates ATP.

It belongs to the ATPase alpha/beta chains family. As to quaternary structure, has multiple subunits with at least A(3), B(3), C, D, E, F, H, I and proteolipid K(x).

It is found in the cell membrane. The catalysed reaction is ATP + H2O + 4 H(+)(in) = ADP + phosphate + 5 H(+)(out). Its function is as follows. Component of the A-type ATP synthase that produces ATP from ADP in the presence of a proton gradient across the membrane. The A chain is the catalytic subunit. The chain is A-type ATP synthase subunit A from Halobacterium salinarum (strain ATCC 29341 / DSM 671 / R1).